We begin with the raw amino-acid sequence, 363 residues long: Homeobox protein Hox-A2a (363 aa).

Disordered regions lie at residues 30-88 (DSFQ…LPPE), 98-117 (SKRN…GPVC), 189-220 (RMKH…SDEE), and 268-308 (DKNL…LDVS). Positions 31–44 (SFQSSSIKSSTLSR) are enriched in polar residues. Residues 88-93 (EYPWMR) carry the Antp-type hexapeptide motif. Residues 103–113 (LPNSTTTTISN) are compositionally biased toward polar residues. Residues 137 to 196 (SRRLRTAYTNTQLLELEKEFHFNKYLCRPRRVEIAALLDLTERQVKVWFQNRRMKHKRQT) constitute a DNA-binding region (homeobox).

Belongs to the Antp homeobox family. Proboscipedia subfamily.

It localises to the nucleus. Its function is as follows. Sequence-specific transcription factor which is part of a developmental regulatory system that provides cells with specific positional identities on the anterior-posterior axis. This is Homeobox protein Hox-A2a (hoxa2a) from Takifugu rubripes (Japanese pufferfish).